We begin with the raw amino-acid sequence, 156 residues long: Small ribosomal subunit protein uS7 (156 aa).

It belongs to the universal ribosomal protein uS7 family. As to quaternary structure, part of the 30S ribosomal subunit. Contacts proteins S9 and S11.

Functionally, one of the primary rRNA binding proteins, it binds directly to 16S rRNA where it nucleates assembly of the head domain of the 30S subunit. Is located at the subunit interface close to the decoding center, probably blocks exit of the E-site tRNA. The protein is Small ribosomal subunit protein uS7 of Clostridium botulinum (strain Kyoto / Type A2).